The chain runs to 474 residues: Glutathione synthetase (474 aa).

Residue arginine 125 coordinates substrate. An ATP-binding site is contributed by glutamate 144. The Mg(2+) site is built by glutamate 144 and asparagine 146. Residues 148 to 151, 214 to 216, glutamine 220, and 267 to 270 each bind substrate; these read IAAS, QRN, and RTGY. Residues lysine 305, 364–373, tyrosine 375, 398–401, and glutamate 425 contribute to the ATP site; these read KPQREGGGNN and MDKI. Glutamate 368 contacts Mg(2+). Arginine 450 contacts substrate. Residues lysine 452 and aspartate 458 each coordinate ATP. Residue 461–462 participates in substrate binding; it reads VA.

It belongs to the eukaryotic GSH synthase family. Homodimer. Mg(2+) is required as a cofactor. As to expression, expressed ubiquitously.

The enzyme catalyses gamma-L-glutamyl-L-cysteine + glycine + ATP = glutathione + ADP + phosphate + H(+). The catalysed reaction is gamma-L-glutamyl-(2S)-2-aminobutanoate + glycine + ATP = ophthalmate + ADP + phosphate + H(+). It functions in the pathway sulfur metabolism; glutathione biosynthesis; glutathione from L-cysteine and L-glutamate: step 2/2. In terms of biological role, catalyzes the production of glutathione from gamma-glutamylcysteine and glycine in an ATP-dependent manner. Glutathione (gamma-glutamylcysteinylglycine, GSH) is the most abundant intracellular thiol in living aerobic cells and is required for numerous processes including the protection of cells against oxidative damage, amino acid transport, the detoxification of foreign compounds, the maintenance of protein sulfhydryl groups in a reduced state and acts as a cofactor for a number of enzymes. Participates in ophthalmate biosynthesis in hepatocytes. In Xenopus laevis (African clawed frog), this protein is Glutathione synthetase.